The primary structure comprises 322 residues: ATP-dependent 6-phosphofructokinase (322 aa).

Gly-11 contacts ATP. 21 to 25 (RAVTR) lines the ADP pocket. ATP-binding positions include 72–73 (RC) and 102–105 (GDGS). Residue Asp-103 participates in Mg(2+) binding. Residue 127 to 129 (TID) participates in substrate binding. Catalysis depends on Asp-129, which acts as the Proton acceptor. An ADP-binding site is contributed by Arg-156. Residues Arg-164 and 171–173 (MGR) each bind substrate. Residues 187–189 (GAE), Arg-213, and 215–217 (KKH) contribute to the ADP site. Substrate is bound by residues Glu-224, Arg-245, and 251-254 (HIQR).

This sequence belongs to the phosphofructokinase type A (PFKA) family. ATP-dependent PFK group I subfamily. Prokaryotic clade 'B1' sub-subfamily. As to quaternary structure, homotetramer. Mg(2+) is required as a cofactor.

The protein resides in the cytoplasm. It catalyses the reaction beta-D-fructose 6-phosphate + ATP = beta-D-fructose 1,6-bisphosphate + ADP + H(+). The protein operates within carbohydrate degradation; glycolysis; D-glyceraldehyde 3-phosphate and glycerone phosphate from D-glucose: step 3/4. Its activity is regulated as follows. Allosterically activated by ADP and other diphosphonucleosides, and allosterically inhibited by phosphoenolpyruvate. Catalyzes the phosphorylation of D-fructose 6-phosphate to fructose 1,6-bisphosphate by ATP, the first committing step of glycolysis. This chain is ATP-dependent 6-phosphofructokinase, found in Staphylococcus epidermidis (strain ATCC 12228 / FDA PCI 1200).